We begin with the raw amino-acid sequence, 610 residues long: Glutamine--fructose-6-phosphate aminotransferase [isomerizing] (610 aa).

C2 (nucleophile; for GATase activity) is an active-site residue. Residues 2-219 (CGIVGATSER…EGDVADINRT (218 aa)) enclose the Glutamine amidotransferase type-2 domain. SIS domains are found at residues 287–427 (AADI…YRGM) and 459–600 (LAQD…VDQP). The active-site For Fru-6P isomerization activity is K605.

In terms of assembly, homodimer.

It localises to the cytoplasm. It carries out the reaction D-fructose 6-phosphate + L-glutamine = D-glucosamine 6-phosphate + L-glutamate. Catalyzes the first step in hexosamine metabolism, converting fructose-6P into glucosamine-6P using glutamine as a nitrogen source. The chain is Glutamine--fructose-6-phosphate aminotransferase [isomerizing] from Idiomarina loihiensis (strain ATCC BAA-735 / DSM 15497 / L2-TR).